The following is a 384-amino-acid chain: N-acetyldiaminopimelate deacetylase (384 aa).

Asp73 is an active-site residue. Glu132 functions as the Proton acceptor in the catalytic mechanism.

It belongs to the peptidase M20A family. N-acetyldiaminopimelate deacetylase subfamily.

It carries out the reaction N-acetyl-(2S,6S)-2,6-diaminopimelate + H2O = (2S,6S)-2,6-diaminopimelate + acetate. It functions in the pathway amino-acid biosynthesis; L-lysine biosynthesis via DAP pathway; LL-2,6-diaminopimelate from (S)-tetrahydrodipicolinate (acetylase route): step 3/3. Its function is as follows. Catalyzes the conversion of N-acetyl-diaminopimelate to diaminopimelate and acetate. This is N-acetyldiaminopimelate deacetylase from Limosilactobacillus fermentum (strain NBRC 3956 / LMG 18251) (Lactobacillus fermentum).